A 472-amino-acid chain; its full sequence is Transcription factor TGAL1 (472 aa).

Residues 136–190 (WGESTIADTSPRTDTSTDPDTDERNQMFEQGQLAAPTASDSSDRSKDKLDHKTLR) are disordered. A compositionally biased stretch (low complexity) spans 143-153 (DTSPRTDTSTD). The segment covering 176–187 (SSDRSKDKLDHK) has biased composition (basic and acidic residues). Residues 185–229 (DHKTLRRLAQNREAARKSRLRKKAYIQNLESSRLKLTQIEQELQR) enclose the bZIP domain. The tract at residues 187-207 (KTLRRLAQNREAARKSRLRKK) is basic motif. The segment at 213–227 (LESSRLKLTQIEQEL) is leucine-zipper. The region spanning 252 to 469 (ALAFDMEYAR…RALSSLWLAR (218 aa)) is the DOG1 domain.

Belongs to the bZIP family. Isoforms 1 and 2 interact with NPR2/NH2. Isoform 2 interacts with NPR1/NH1 and NPR3/NH3.

The protein resides in the nucleus. In terms of biological role, transcriptional regulator involved in defense response. This is Transcription factor TGAL1 from Oryza sativa subsp. japonica (Rice).